A 222-amino-acid polypeptide reads, in one-letter code: L-serine dehydratase, beta chain (222 aa).

The ACT domain maps to 150-222 (TILLEYPEQR…RFTTAKYVEV (73 aa)).

Belongs to the iron-sulfur dependent L-serine dehydratase family. Heterooctamer of four alpha chains and four beta chains. [4Fe-4S] cluster is required as a cofactor.

The catalysed reaction is L-serine = pyruvate + NH4(+). Its pathway is carbohydrate biosynthesis; gluconeogenesis. The sequence is that of L-serine dehydratase, beta chain (sdhB) from Peptoniphilus asaccharolyticus (Peptostreptococcus asaccharolyticus).